The chain runs to 319 residues: Nuclear hormone receptor family member nhr-174 (319 aa).

The nuclear receptor DNA-binding region spans 7–81 (DPVCPVCEFP…AGMKRNLVRQ (75 aa)). 2 consecutive NR C4-type zinc fingers follow at residues 10–31 (CPVCEFPSNVELHFGGLVCGAC) and 47–63 (CEKKNQCKGKRKNCRAC). In terms of domain architecture, NR LBD spans 130-319 (EAEKDVSKIL…SMKKSRYLQF (190 aa)).

This sequence belongs to the nuclear hormone receptor family.

The protein resides in the nucleus. Its function is as follows. Orphan nuclear receptor. The protein is Nuclear hormone receptor family member nhr-174 (nhr-174) of Caenorhabditis elegans.